A 681-amino-acid chain; its full sequence is Transketolase 2 (681 aa).

Histidine 30 is a substrate binding site. Thiamine diphosphate contacts are provided by residues histidine 69 and 116-118 (GPL). Mg(2+) is bound at residue aspartate 157. The thiamine diphosphate site is built by glycine 158 and asparagine 187. The Mg(2+) site is built by asparagine 187 and isoleucine 189. Substrate contacts are provided by histidine 263, arginine 359, and serine 386. A thiamine diphosphate-binding site is contributed by histidine 263. Thiamine diphosphate is bound by residues glutamate 418 and phenylalanine 445. Glutamate 418 acts as the Proton donor in catalysis. Residues histidine 469, aspartate 477, and arginine 528 each contribute to the substrate site.

Belongs to the transketolase family. As to quaternary structure, homodimer. The cofactor is Mg(2+). Ca(2+) serves as cofactor. It depends on Mn(2+) as a cofactor. Co(2+) is required as a cofactor. Requires thiamine diphosphate as cofactor.

The catalysed reaction is D-sedoheptulose 7-phosphate + D-glyceraldehyde 3-phosphate = aldehydo-D-ribose 5-phosphate + D-xylulose 5-phosphate. Functionally, catalyzes the transfer of a two-carbon ketol group from a ketose donor to an aldose acceptor, via a covalent intermediate with the cofactor thiamine pyrophosphate. This is Transketolase 2 (TKL2) from Saccharomyces cerevisiae (strain ATCC 204508 / S288c) (Baker's yeast).